The chain runs to 477 residues: Bifunctional protein HldE (477 aa).

Positions 1–318 (MKVTLPEFER…ENAVRGRADT (318 aa)) are ribokinase. At K179 the chain carries N6-acetyllysine. 195–198 (NLSE) is a binding site for ATP. The active site involves D264. Residues 344 to 477 (MTNGVFDILH…IKKIQQDKKG (134 aa)) are cytidylyltransferase.

It in the N-terminal section; belongs to the carbohydrate kinase PfkB family. In the C-terminal section; belongs to the cytidylyltransferase family. As to quaternary structure, homodimer.

The enzyme catalyses D-glycero-beta-D-manno-heptose 7-phosphate + ATP = D-glycero-beta-D-manno-heptose 1,7-bisphosphate + ADP + H(+). It carries out the reaction D-glycero-beta-D-manno-heptose 1-phosphate + ATP + H(+) = ADP-D-glycero-beta-D-manno-heptose + diphosphate. It functions in the pathway nucleotide-sugar biosynthesis; ADP-L-glycero-beta-D-manno-heptose biosynthesis; ADP-L-glycero-beta-D-manno-heptose from D-glycero-beta-D-manno-heptose 7-phosphate: step 1/4. Its pathway is nucleotide-sugar biosynthesis; ADP-L-glycero-beta-D-manno-heptose biosynthesis; ADP-L-glycero-beta-D-manno-heptose from D-glycero-beta-D-manno-heptose 7-phosphate: step 3/4. Functionally, catalyzes the phosphorylation of D-glycero-D-manno-heptose 7-phosphate at the C-1 position to selectively form D-glycero-beta-D-manno-heptose-1,7-bisphosphate. Catalyzes the ADP transfer from ATP to D-glycero-beta-D-manno-heptose 1-phosphate, yielding ADP-D-glycero-beta-D-manno-heptose. The polypeptide is Bifunctional protein HldE (Shigella flexneri serotype 5b (strain 8401)).